A 499-amino-acid chain; its full sequence is Flotillin-like protein 2 (499 aa).

Residue Cys37 is the site of S-palmitoyl cysteine attachment. Residues 243–319 (LREEAKVKAE…LRLTEKLKAE (77 aa)) are a coiled coil.

It belongs to the band 7/mec-2 family. Flotillin subfamily. Post-translationally, may be palmitoylated.

It is found in the cell membrane. The protein localises to the membrane. Its subcellular location is the caveola. Functionally, may act as a scaffolding protein within caveolar membranes, functionally participating in formation of caveolae or caveolae-like vesicles. The polypeptide is Flotillin-like protein 2 (FLOT2) (Oryza sativa subsp. japonica (Rice)).